We begin with the raw amino-acid sequence, 255 residues long: Acetylglutamate kinase (255 aa).

Residues 40–41 (GG), Arg62, and Asn153 contribute to the substrate site.

Belongs to the acetylglutamate kinase family. ArgB subfamily.

It localises to the cytoplasm. It catalyses the reaction N-acetyl-L-glutamate + ATP = N-acetyl-L-glutamyl 5-phosphate + ADP. The protein operates within amino-acid biosynthesis; L-arginine biosynthesis; N(2)-acetyl-L-ornithine from L-glutamate: step 2/4. Functionally, catalyzes the ATP-dependent phosphorylation of N-acetyl-L-glutamate. The polypeptide is Acetylglutamate kinase (Bacillus cereus (strain ZK / E33L)).